A 341-amino-acid polypeptide reads, in one-letter code: Tubulin beta chain (341 aa).

Ser-64, Gly-68, Thr-69, Gly-70, Asn-130, and Asn-152 together coordinate GTP.

Belongs to the tubulin family. In terms of assembly, dimer of alpha and beta chains. A typical microtubule is a hollow water-filled tube with an outer diameter of 25 nm and an inner diameter of 15 nM. Alpha-beta heterodimers associate head-to-tail to form protofilaments running lengthwise along the microtubule wall with the beta-tubulin subunit facing the microtubule plus end conferring a structural polarity. Microtubules usually have 13 protofilaments but different protofilament numbers can be found in some organisms and specialized cells. Mg(2+) serves as cofactor.

The protein localises to the cytoplasm. It is found in the cytoskeleton. In terms of biological role, tubulin is the major constituent of microtubules, a cylinder consisting of laterally associated linear protofilaments composed of alpha- and beta-tubulin heterodimers. Microtubules grow by the addition of GTP-tubulin dimers to the microtubule end, where a stabilizing cap forms. Below the cap, tubulin dimers are in GDP-bound state, owing to GTPase activity of alpha-tubulin. The chain is Tubulin beta chain from Haliotis discus (Abalone).